The following is a 167-amino-acid chain: Small ribosomal subunit protein uS5 (167 aa).

An S5 DRBM domain is found at 11-74 (LQEKLIAVNR…EKARRAMINV (64 aa)).

This sequence belongs to the universal ribosomal protein uS5 family. Part of the 30S ribosomal subunit. Contacts proteins S4 and S8.

With S4 and S12 plays an important role in translational accuracy. Its function is as follows. Located at the back of the 30S subunit body where it stabilizes the conformation of the head with respect to the body. The sequence is that of Small ribosomal subunit protein uS5 from Serratia proteamaculans (strain 568).